We begin with the raw amino-acid sequence, 79 residues long: Cyclotide phyb-A (79 aa).

The propeptide occupies 1 to 43; that stretch reads MVGVNSLRSALYLIVLILFVQLTYFSDARVMDVDLSRAFLPLT. The cyclopeptide (Gly-Asn) cross-link spans 44–73; that stretch reads GIGCGESCVWIPCVSAAIGCSCSNKICYRN. 3 disulfide bridges follow: C47-C63, C51-C65, and C56-C70. Residues 74–79 constitute a propeptide that is removed on maturation; sequence GIIPKK.

Post-translationally, this is a cyclic peptide. Contains 3 disulfide bonds. In terms of tissue distribution, expressed in midvein, lamina and periphery of leaves (at protein level).

Probably participates in a plant defense mechanism. In Petunia hybrida (Petunia), this protein is Cyclotide phyb-A.